The sequence spans 341 residues: NADH-quinone oxidoreductase subunit H 1 (341 aa).

A run of 8 helical transmembrane segments spans residues L13–I33, G82–I102, V115–G135, I161–V181, L190–L210, Y248–P268, W277–M297, and V317–G337.

The protein belongs to the complex I subunit 1 family. NDH-1 is composed of 14 different subunits. Subunits NuoA, H, J, K, L, M, N constitute the membrane sector of the complex.

The protein localises to the cell inner membrane. It carries out the reaction a quinone + NADH + 5 H(+)(in) = a quinol + NAD(+) + 4 H(+)(out). NDH-1 shuttles electrons from NADH, via FMN and iron-sulfur (Fe-S) centers, to quinones in the respiratory chain. The immediate electron acceptor for the enzyme in this species is believed to be ubiquinone. Couples the redox reaction to proton translocation (for every two electrons transferred, four hydrogen ions are translocated across the cytoplasmic membrane), and thus conserves the redox energy in a proton gradient. This subunit may bind ubiquinone. The sequence is that of NADH-quinone oxidoreductase subunit H 1 from Rhodopseudomonas palustris (strain BisB18).